We begin with the raw amino-acid sequence, 388 residues long: ATP phosphoribosyltransferase regulatory subunit (388 aa).

The protein belongs to the class-II aminoacyl-tRNA synthetase family. HisZ subfamily. As to quaternary structure, heteromultimer composed of HisG and HisZ subunits.

It is found in the cytoplasm. It functions in the pathway amino-acid biosynthesis; L-histidine biosynthesis; L-histidine from 5-phospho-alpha-D-ribose 1-diphosphate: step 1/9. Required for the first step of histidine biosynthesis. May allow the feedback regulation of ATP phosphoribosyltransferase activity by histidine. The sequence is that of ATP phosphoribosyltransferase regulatory subunit from Acinetobacter baumannii (strain SDF).